We begin with the raw amino-acid sequence, 103 residues long: Flagellar hook-basal body complex protein FliE (103 aa).

It belongs to the FliE family.

It is found in the bacterial flagellum basal body. The polypeptide is Flagellar hook-basal body complex protein FliE (Helicobacter hepaticus (strain ATCC 51449 / 3B1)).